Reading from the N-terminus, the 79-residue chain is Acyl carrier protein (79 aa).

A Carrier domain is found at 2–77; that stretch reads ADHASKIKDI…DAVAYLEAKV (76 aa). At serine 37 the chain carries O-(pantetheine 4'-phosphoryl)serine.

The protein belongs to the acyl carrier protein (ACP) family. In terms of processing, 4'-phosphopantetheine is transferred from CoA to a specific serine of apo-ACP by AcpS. This modification is essential for activity because fatty acids are bound in thioester linkage to the sulfhydryl of the prosthetic group.

The protein localises to the cytoplasm. Its pathway is lipid metabolism; fatty acid biosynthesis. Functionally, carrier of the growing fatty acid chain in fatty acid biosynthesis. This is Acyl carrier protein from Gemmatimonas aurantiaca (strain DSM 14586 / JCM 11422 / NBRC 100505 / T-27).